The primary structure comprises 105 residues: NADH-quinone oxidoreductase subunit K (105 aa).

3 helical membrane-spanning segments follow: residues Ile-7–Val-27, Ile-34–Phe-54, and Phe-66–Ile-86.

The protein belongs to the complex I subunit 4L family. NDH-1 is composed of 14 different subunits. Subunits NuoA, H, J, K, L, M, N constitute the membrane sector of the complex.

The protein localises to the cell inner membrane. It catalyses the reaction a quinone + NADH + 5 H(+)(in) = a quinol + NAD(+) + 4 H(+)(out). NDH-1 shuttles electrons from NADH, via FMN and iron-sulfur (Fe-S) centers, to quinones in the respiratory chain. The immediate electron acceptor for the enzyme in this species is believed to be a menaquinone. Couples the redox reaction to proton translocation (for every two electrons transferred, four hydrogen ions are translocated across the cytoplasmic membrane), and thus conserves the redox energy in a proton gradient. The chain is NADH-quinone oxidoreductase subunit K from Chlorobaculum parvum (strain DSM 263 / NCIMB 8327) (Chlorobium vibrioforme subsp. thiosulfatophilum).